The chain runs to 277 residues: Probable diphthine methyl ester synthase (277 aa).

S-adenosyl-L-methionine-binding positions include leucine 9, aspartate 89, glycine 92, 117 to 118 (SV), leucine 168, leucine 227, and histidine 252.

The protein belongs to the diphthine synthase family.

The enzyme catalyses 2-[(3S)-amino-3-carboxypropyl]-L-histidyl-[translation elongation factor 2] + 4 S-adenosyl-L-methionine = diphthine methyl ester-[translation elongation factor 2] + 4 S-adenosyl-L-homocysteine + 3 H(+). It functions in the pathway protein modification; peptidyl-diphthamide biosynthesis. Functionally, S-adenosyl-L-methionine-dependent methyltransferase that catalyzes four methylations of the modified target histidine residue in translation elongation factor 2 (EF-2), to form an intermediate called diphthine methyl ester. The four successive methylation reactions represent the second step of diphthamide biosynthesis. In Arabidopsis thaliana (Mouse-ear cress), this protein is Probable diphthine methyl ester synthase.